The primary structure comprises 184 residues: dCTP deaminase (184 aa).

DCTP contacts are provided by residues 107 to 112 (KSTYAR), 131 to 133 (TLE), Gln-152, Tyr-166, and Gln-176. Residue Glu-133 is the Proton donor/acceptor of the active site.

Belongs to the dCTP deaminase family. In terms of assembly, homotrimer.

It catalyses the reaction dCTP + H2O + H(+) = dUTP + NH4(+). The protein operates within pyrimidine metabolism; dUMP biosynthesis; dUMP from dCTP (dUTP route): step 1/2. Its function is as follows. Catalyzes the deamination of dCTP to dUTP. The chain is dCTP deaminase from Erythrobacter litoralis (strain HTCC2594).